The sequence spans 796 residues: Lon protease (796 aa).

One can recognise a Lon N-terminal domain in the interval 19–213 (LPVVVTRGIF…LLKELIINRP (195 aa)). ATP is bound at residue 376–383 (GPPGVGKT). Positions 612-793 (ESQVGVVTGL…EDVYEIIFKN (182 aa)) constitute a Lon proteolytic domain. Active-site residues include Ser699 and Lys742.

Belongs to the peptidase S16 family. Homohexamer. Organized in a ring with a central cavity.

The protein localises to the cytoplasm. It carries out the reaction Hydrolysis of proteins in presence of ATP.. Functionally, ATP-dependent serine protease that mediates the selective degradation of mutant and abnormal proteins as well as certain short-lived regulatory proteins. Required for cellular homeostasis and for survival from DNA damage and developmental changes induced by stress. Degrades polypeptides processively to yield small peptide fragments that are 5 to 10 amino acids long. Binds to DNA in a double-stranded, site-specific manner. The sequence is that of Lon protease from Mycoplasma mycoides subsp. mycoides SC (strain CCUG 32753 / NCTC 10114 / PG1).